We begin with the raw amino-acid sequence, 148 residues long: Transcriptional regulator MraZ (148 aa).

SpoVT-AbrB domains lie at 5 to 53 and 82 to 125; these read ETAI…VEKE and SALL…SEQA.

This sequence belongs to the MraZ family. Forms oligomers.

It localises to the cytoplasm. The protein localises to the nucleoid. In Xylella fastidiosa (strain 9a5c), this protein is Transcriptional regulator MraZ.